The sequence spans 408 residues: GTPase Obg (408 aa).

The Obg domain maps to 1 to 159 (MKFVDEVSIR…RDLKMEMKVL (159 aa)). The segment at 127-148 (NTRFKSSTNRAPRQTTPGKPGE) is disordered. Residues 129–143 (RFKSSTNRAPRQTTP) are compositionally biased toward polar residues. One can recognise an OBG-type G domain in the interval 160–333 (ADVGLLGLPN…LSHDLMRYLE (174 aa)). Residues 166-173 (GLPNAGKS), 191-195 (FTTLV), 213-216 (DIPG), 283-286 (NKAD), and 314-316 (SAI) contribute to the GTP site. The Mg(2+) site is built by Ser-173 and Thr-193. Residues 385-401 (GDDDGWDDDFEDDEDGP) are compositionally biased toward acidic residues. The disordered stretch occupies residues 385 to 408 (GDDDGWDDDFEDDEDGPEIIYVRD).

This sequence belongs to the TRAFAC class OBG-HflX-like GTPase superfamily. OBG GTPase family. Monomer. The cofactor is Mg(2+).

The protein localises to the cytoplasm. Its function is as follows. An essential GTPase which binds GTP, GDP and possibly (p)ppGpp with moderate affinity, with high nucleotide exchange rates and a fairly low GTP hydrolysis rate. Plays a role in control of the cell cycle, stress response, ribosome biogenesis and in those bacteria that undergo differentiation, in morphogenesis control. This chain is GTPase Obg, found in Pseudomonas putida (strain ATCC 700007 / DSM 6899 / JCM 31910 / BCRC 17059 / LMG 24140 / F1).